Consider the following 842-residue polypeptide: Protein translocase subunit SecA (842 aa).

ATP is bound by residues glutamine 85, 103–107 (GEGKT), and aspartate 493. The Zn(2+) site is built by cysteine 825, cysteine 827, cysteine 836, and histidine 837.

The protein belongs to the SecA family. Monomer and homodimer. Part of the essential Sec protein translocation apparatus which comprises SecA, SecYEG and auxiliary proteins SecDF. Other proteins may also be involved. Requires Zn(2+) as cofactor.

The protein localises to the cell membrane. It localises to the cytoplasm. The catalysed reaction is ATP + H2O + cellular proteinSide 1 = ADP + phosphate + cellular proteinSide 2.. Functionally, part of the Sec protein translocase complex. Interacts with the SecYEG preprotein conducting channel. Has a central role in coupling the hydrolysis of ATP to the transfer of proteins into and across the cell membrane, serving as an ATP-driven molecular motor driving the stepwise translocation of polypeptide chains across the membrane. This is Protein translocase subunit SecA from Streptococcus equi subsp. zooepidemicus (strain MGCS10565).